A 254-amino-acid chain; its full sequence is Probable transcriptional regulatory protein Saro_0419 (254 aa).

A compositionally biased stretch (basic residues) spans 1-14 (MAGHSKFKNIMHRK). A disordered region spans residues 1 to 22 (MAGHSKFKNIMHRKGAQDKKRS).

The protein belongs to the TACO1 family.

Its subcellular location is the cytoplasm. The chain is Probable transcriptional regulatory protein Saro_0419 from Novosphingobium aromaticivorans (strain ATCC 700278 / DSM 12444 / CCUG 56034 / CIP 105152 / NBRC 16084 / F199).